A 186-amino-acid chain; its full sequence is UPF0301 protein Daro_3893 (186 aa).

The protein belongs to the UPF0301 (AlgH) family.

This Dechloromonas aromatica (strain RCB) protein is UPF0301 protein Daro_3893.